Here is a 123-residue protein sequence, read N- to C-terminus: Large ribosomal subunit protein bL12 (123 aa).

Belongs to the bacterial ribosomal protein bL12 family. As to quaternary structure, homodimer. Part of the ribosomal stalk of the 50S ribosomal subunit. Forms a multimeric L10(L12)X complex, where L10 forms an elongated spine to which 2 to 4 L12 dimers bind in a sequential fashion. Binds GTP-bound translation factors.

Functionally, forms part of the ribosomal stalk which helps the ribosome interact with GTP-bound translation factors. Is thus essential for accurate translation. The protein is Large ribosomal subunit protein bL12 of Neisseria perflava.